The primary structure comprises 429 residues: Glutamate-1-semialdehyde 2,1-aminomutase 2 (429 aa).

The residue at position 268 (Lys-268) is an N6-(pyridoxal phosphate)lysine.

It belongs to the class-III pyridoxal-phosphate-dependent aminotransferase family. HemL subfamily. As to quaternary structure, homodimer. Pyridoxal 5'-phosphate serves as cofactor.

The protein resides in the cytoplasm. The enzyme catalyses (S)-4-amino-5-oxopentanoate = 5-aminolevulinate. Its pathway is porphyrin-containing compound metabolism; protoporphyrin-IX biosynthesis; 5-aminolevulinate from L-glutamyl-tRNA(Glu): step 2/2. This chain is Glutamate-1-semialdehyde 2,1-aminomutase 2, found in Staphylococcus aureus (strain Mu50 / ATCC 700699).